A 220-amino-acid polypeptide reads, in one-letter code: MGFQIAIDGPAASGKSTVARLLAEKLGFDHLNTGATYRSVAVYLHERGFSPFSAEKEIENALKDLKIDYVNGRVYINGEDYTEKIQSPEAGVLASNFARLEVVRRHLVRIQREICDDKNIVVEGRDIGTVVLPNAHLKIFLTASLEARVERKLKEYQKRGLKVTKEEVERELISRDEQDSKRNVAPLKPAEDAVIIDTTSMSVEEVLDRILKLVRERMNT.

9–17 contributes to the ATP binding site; sequence GPAASGKST.

It belongs to the cytidylate kinase family. Type 1 subfamily.

Its subcellular location is the cytoplasm. The catalysed reaction is CMP + ATP = CDP + ADP. It catalyses the reaction dCMP + ATP = dCDP + ADP. This chain is Cytidylate kinase, found in Thermotoga petrophila (strain ATCC BAA-488 / DSM 13995 / JCM 10881 / RKU-1).